Reading from the N-terminus, the 183-residue chain is Small ribosomal subunit protein uS4c (183 aa).

In terms of domain architecture, S4 RNA-binding spans 82-143; that stretch reads MRLDNILFRL…KQRSKALIQN (62 aa).

Belongs to the universal ribosomal protein uS4 family. As to quaternary structure, part of the 30S ribosomal subunit. Contacts protein S5. The interaction surface between S4 and S5 is involved in control of translational fidelity.

The protein localises to the plastid. Its subcellular location is the chloroplast. Its function is as follows. One of the primary rRNA binding proteins, it binds directly to 16S rRNA where it nucleates assembly of the body of the 30S subunit. Functionally, with S5 and S12 plays an important role in translational accuracy. The sequence is that of Small ribosomal subunit protein uS4c (rps4) from Freesia sp. (strain Lejeune 1997).